The chain runs to 2453 residues: MHVSLAEALEVRGGPLQEEEIWAVLNQSAESLQEVFRRVSIADPAALGFIISPWSLLLLPSGSVSFTDENVSNQDLRASTAPEVLQSHSLTSLADVEKIHIYSLGMTLYWGADHEVPQSQPIKLGDHLNSILLGMCEDVIYARVSVRTVLDACSAHIRNSNCAPSFSNVKQLVKLVLGNISGTDPLSRSSEQKPDRSQAIRDRLRGKGLPTGRSSTSDALDTHEAPLSQQTFVNKGLSKSMGFLSIRDTRDEEDYLKDTPSDNNSRHEDSETFSSPYQFKTSTPQMDALSKKKTWASSMDLLCAANRDISGETGRYQRCDPKTVTGRTSITPRKKEGRYSDGSIALDIFGPQKVEPVIHTRELPTSTAVSSALDRIRERQQKLQVLREAMNVEEPVRRYKTYHSDIFSISSESPSVISSESDFRQVRKSEASKRFESSSGLPGVDETGQTRPSRQYETSLEGNLINQDIMLRRQEEEMMQLQARMALRQSRLSLYPGDTVKASMLDISRDPLREMALETAMTQRKLRNFFGPEFVKMTVEPFVSLDLPRSILSQTKKGKSEDQRRKVNIRLLSGQRLELTCDTKTICKDVFDMVVAHIGLVEHHLFALATRKENEYFFVDPDLKLTKVAPEGWKEEPKRKGKAAVDFTLFFRIKFFMDDVSLIQHDLTCHQYYLQLRKDLLDERVHCDDEAALLLASLALQAEYGDYQPEVHGVSYFRLEHYLPARVMEKLDVSYIKEELPKLHNTYAGASEKETELEFLKVCQRLTEYGVHFHRVHPEKKSQTGILLGVCSKGVLVFEVHNGVRALVLRFPWRETKKISFSKKKITLQNTSDGIKHAFQTDSSKACQYLLHLCSSQHKFQLQMRARQSNQDAQDIERASFRSLNLQAESVRGFNMGRAISTGSLASSTINKLAVRPLSVQAEILKRLSSSEWSLYQPLQNSSKEKTDKASWEEKPRGMSKSYHDLSQASLCPHRKQVINMEALPQAFAELVGKPLYPMARSDTESLAGLPKLDNSKSVASLNRSPERRNHESDSSTEDPGQAYVVGMSLPSSGKSSSQVPFKDNDTLHKRWSIVSSPEREITLVNLKKDPKHGLGFQIIGGEKMGRLDLGVFISAVTPGGPADLDGCLKPGDRLISVNSVSLEGVSHHAAVDILQNAPEDVTLVISQPKEKPSKVPSTPVHFANGMKSYTKKPAYMQDSAMDPSEDQPWPRGTLRHIPESPFGLSGGLREGSLSSQDSRTESASLSQSQVNGFFASHLGDRGWQEPQHSSPSPSVTTKVNEKTFSDSNRSKAKRRGISDLIEHLDCADSDKDDSTYTSSQDHQTSKQEPSSSLSTSNKTSFPTSSASPPKPGDTFEVELAKTDGSLGISVTGGVNTSVRHGGIYVKAIIPKGAAESDGRIHKGDRVLAVNGVSLEGATHKQAVETLRNTGQVVHLLLEKGQVPTSRERDPAGPQSPPPDQDAQRQAPEKVAKQTPHVKDYSFVTEDNTFEVKLFKNSSGLGFSFSREDNLIPEQINGSIVRVKKLFPGQPAAESGKIDVGDVILKVNGAPLKGLSQQDVISALRGTAPEVSLLLCRPAPGVLPEIDTTFLNPLYSPANSFLNSSKETSQPSSSVEQGASSDDNGVSGKTKNHCRAPSRRESYSDHSESGEDDSVRAPAKMPNVTRVAAFPHEAPRSQEESICAMFYLPRKIPGKLESESSHPPPLDVSPGQTCQPPAECAPSDATGKHFTHLASQLSKEENITTLKNDLGNHLEDSELEVELLITLVKSEKGSLGFTVTKGSQSIGCYVHDVIQDPAKGDGRLKAGDRLIKVNDTDVTNMTHTDAVNLLRAAPKTVRLVLGRILELPRMPVFPHLLPDITVTCHGEELGFSLSGGQGSPHGVVYISDINPRSAAAVDGSLQLLDIIHYVNGVSTQGMTLEDANRALDLSLPSVVLKVTRDGCPVVPTTRAAISAPRFTKANGLTSMEPSGQPALMPKNSFSKVNGEGVHEAVCPAGEGSSSQMKESAGLTETKESNSRDDDIYDDPQEAEVIQSLLDVVDEEAQNLLNQRHATRRACSPDPLRTNGEAPEEGDTDYDGSPLPEDVPESVSSGEGKVDLASLTAASQEEKPIEEDATQESRNSTTETTDGEDSSKDPPFLTNEELAALPVVRVPPSGKYTGTQLQATIRTLQGLLDQGIPSKELENLQELKPLDQCLIGQTKENRRKNRYKNILPYDTTRVPLGDEGGYINASFIRIPVGTQEFVYIACQGPLPTTVGDFWQMVWEQNSTVIAMMTQEVEGEKIKCQRYWPSILGTTTMANERLRLALLRMQQLKGFIVRVMALEDIQTGEVRHISHLNFTAWPDHDTPSQPDDLLTFISYMRHIRRSGPVITHCSAGIGRSGTLICIDVVLGLISQDLEFDISDLVRCMRLQRHGMVQTEGQYVFCYQVILYVLTHLQAEEQKAQQPGLPQP.

The KIND domain occupies 3–190 (VSLAEALEVR…SGTDPLSRSS (188 aa)). Positions 183–227 (TDPLSRSSEQKPDRSQAIRDRLRGKGLPTGRSSTSDALDTHEAPL) are disordered. Positions 190-205 (SEQKPDRSQAIRDRLR) are enriched in basic and acidic residues. The residue at position 240 (S240) is a Phosphoserine. The tract at residues 253–285 (EDYLKDTPSDNNSRHEDSETFSSPYQFKTSTPQ) is disordered. The segment covering 256–270 (LKDTPSDNNSRHEDS) has biased composition (basic and acidic residues). Positions 272–285 (TFSSPYQFKTSTPQ) are enriched in polar residues. Residues S297 and S298 each carry the phosphoserine modification. The segment at 429 to 457 (SEASKRFESSSGLPGVDETGQTRPSRQYE) is disordered. Positions 447-457 (TGQTRPSRQYE) are enriched in polar residues. A coiled-coil region spans residues 458-493 (TSLEGNLINQDIMLRRQEEEMMQLQARMALRQSRLS). The 301-residue stretch at 565-865 (RKVNIRLLSG…SQHKFQLQMR (301 aa)) folds into the FERM domain. Residues S883, S890, S901, S904, and S907 each carry the phosphoserine modification. Basic and acidic residues predominate over residues 944-957 (KEKTDKASWEEKPR). Disordered regions lie at residues 944 to 966 (KEKT…YHDL) and 1007 to 1063 (LAGL…VPFK). Phosphoserine occurs at positions 1021 and 1025. Over residues 1025-1034 (SPERRNHESD) the composition is skewed to basic and acidic residues. A compositionally biased stretch (low complexity) spans 1049 to 1058 (SLPSSGKSSS). A Phosphoserine modification is found at S1076. The 87-residue stretch at 1084-1170 (LVNLKKDPKH…DVTLVISQPK (87 aa)) folds into the PDZ 1 domain. Disordered stretches follow at residues 1199 to 1356 (DSAM…GDTF) and 1441 to 1478 (GQVP…TPHV). The residue at position 1221 (S1221) is a Phosphoserine. 2 stretches are compositionally biased toward polar residues: residues 1242 to 1252 (ESASLSQSQVN) and 1267 to 1279 (PQHS…VTTK). Phosphoserine is present on S1270. Residues 1297–1315 (GISDLIEHLDCADSDKDDS) show a composition bias toward basic and acidic residues. Residues 1331–1341 (SSSLSTSNKTS) show a composition bias toward low complexity. The PDZ 2 domain maps to 1357–1442 (EVELAKTDGS…VVHLLLEKGQ (86 aa)). A compositionally biased stretch (basic and acidic residues) spans 1467–1478 (APEKVAKQTPHV). Positions 1491-1579 (EVKLFKNSSG…EVSLLLCRPA (89 aa)) constitute a PDZ 3 domain. A compositionally biased stretch (polar residues) spans 1602-1629 (LNSSKETSQPSSSVEQGASSDDNGVSGK). 2 disordered regions span residues 1602 to 1662 (LNSS…AKMP) and 1695 to 1726 (KLES…SDAT). A compositionally biased stretch (basic and acidic residues) spans 1638–1655 (SRRESYSDHSESGEDDSV). 2 consecutive PDZ domains span residues 1764–1845 (LITL…GRIL) and 1857–1942 (LPDI…TRDG). 2 disordered regions span residues 1991–2024 (EAVC…DDIY) and 2051–2139 (RHAT…DPPF). A compositionally biased stretch (basic and acidic residues) spans 2012-2021 (ETKESNSRDD). The Tyrosine-protein phosphatase domain occupies 2180-2434 (PSKELENLQE…VFCYQVILYV (255 aa)). Substrate contacts are provided by residues D2345, 2375–2381 (CSAGIGR), and Q2419. The active-site Phosphocysteine intermediate is the C2375.

The protein belongs to the protein-tyrosine phosphatase family. Non-receptor class subfamily. In terms of assembly, interacts (via the first PDZ domain) with PLEKHA1 and PLEKHA2. Interacts (via the second PDZ domain) with TNFRSF6 (Fas receptor) (via C-terminus). Interacts (via the second PDZ domain) with TRIP6 (via the third LIM domain and C-terminus). Interacts (via the third PDZ domain) with NGFR (via C-terminal SVP motif) and PKN2 (via C-terminus). Interacts (via the second or fourth PDZ domains) with PDLIM4 (via C-terminus only or via combined C-terminus and LIM domain, but not LIM domain only). Found in a complex with PDLIM4 and TRIP6. Interacts with PDLIM4; this interaction results in dephosphorylation of SRC 'Tyr-419' by this protein leading to its inactivation. Interacts with BRD7. Interacts with RAPGEF6. Interacts with ARHGAP29. Interacts with PIK3R2; dephosphorylates PIK3R2. Interacts with FBXL2. Interacts (via the FERM domain) with ENTR1. Found in a complex with ENTR1, PTPN13 and GIT1. In terms of tissue distribution, expressed predominantly in kidney and, to a lesser extent, in lung, heart, brain and testis.

It localises to the cytoplasm. The protein localises to the cytoskeleton. Its subcellular location is the nucleus. The protein resides in the cell projection. It is found in the lamellipodium. The enzyme catalyses O-phospho-L-tyrosyl-[protein] + H2O = L-tyrosyl-[protein] + phosphate. Its function is as follows. Tyrosine phosphatase which negatively regulates FAS-induced apoptosis and NGFR-mediated pro-apoptotic signaling. May regulate phosphoinositide 3-kinase (PI3K) signaling through dephosphorylation of PIK3R2. The polypeptide is Tyrosine-protein phosphatase non-receptor type 13 (Ptpn13) (Mus musculus (Mouse)).